The sequence spans 271 residues: N-acetyltransferase ECO1 (271 aa).

The CCHH-type zinc-finger motif lies at 26–50 (VKCPKCSITYSTNSPSDLVQHKRYH). The 163-residue stretch at 109-271 (VMISPKKANE…SGKLLIPCYI (163 aa)) folds into the N-acetyltransferase domain.

It belongs to the acetyltransferase family. ECO subfamily.

It localises to the nucleus. Probable acetyltransferase required for the establishment of sister chromatid cohesion and couple the processes of cohesion and DNA replication to ensure that only sister chromatids become paired together. In contrast to the structural cohesins, the deposition and establishment factors are required only during S phase. Acts by acetylating the cohesin complex component SMC3. This Kluyveromyces lactis (strain ATCC 8585 / CBS 2359 / DSM 70799 / NBRC 1267 / NRRL Y-1140 / WM37) (Yeast) protein is N-acetyltransferase ECO1 (ECO1).